The chain runs to 81 residues: Fungal defensin micasin (81 aa).

The signal sequence occupies residues 1 to 21 (MQFTKLATILLVSLMGSAAIA). Residues 22–43 (APATNNAAVDAAADATPAVEKR) constitute a propeptide that is removed on maturation. 3 cysteine pairs are disulfide-bonded: Cys-47–Cys-68, Cys-54–Cys-76, and Cys-58–Cys-78.

Belongs to the invertebrate defensin family.

It localises to the secreted. Antibacterial peptide with potent activity against both Gram-positive and Gram-negative bacteria. May kill bacteria via an intracellular action mode to affect protein folding. Does not show effects on tested filamentous fungi or on the yeast S.cerevisiae. Does not act by destroying the membrane integrity, which is consistent with its nonamphiphilic architecture. Acts more rapidly than vancomycin, suggesting it does not act by inhibiting cell-wall biosynthesis. Does not cause hemolysis and has no cytotoxic effect on HEK cells. In vivo, is as efficient as vancomycin to protect mouse peritonitis models from S.aureus and P.aeruginosa infections. This chain is Fungal defensin micasin, found in Arthroderma otae (Microsporum canis).